Consider the following 883-residue polypeptide: Aryl hydrocarbon receptor (883 aa).

The propeptide occupies 1–9 (MSSGANITY). The tract at residues 1–38 (MSSGANITYASRKRRKPVQKTVKPIPAEGIKSNPSKRH) is disordered. 2 short sequence motifs (nuclear localization signal) span residues 12–15 (RKRR) and 36–41 (KRHRDR). The bHLH domain occupies 26 to 79 (PAEGIKSNPSKRHRDRLNTELDRLASLLPFPQDVINKLDKLSVLRLSVSYLRAK). Positions 37 to 65 (RHRDRLNTELDRLASLLPFPQDVINKLDK) are DNA-binding. 3 required for maintaining the overall integrity of the AHR:ARNT heterodimer and its transcriptional activity regions span residues 49 to 81 (LASLLPFPQDVINKLDKLSVLRLSVSYLRAKSF), 116 to 124 (LLQALNGFV), and 260 to 262 (FAI). The Nuclear export signal signature appears at 63-71 (LDKLSVLRL). The 65-residue stretch at 111–175 (QEGEFLLQAL…AEFQRQLHWA (65 aa)) folds into the PAS 1 domain. Positions 266 to 336 (LQPPSILEIR…CAESHIRMIK (71 aa)) constitute a PAS 2 domain. The PAC domain occupies 342–383 (MTVFRLLAKHSRWRWVQSNARLIYRNGRPDYIIATQRPLTDE). The tract at residues 421–449 (LPIRTKSNTSRKDWAPQSTPSKDSFHPSS) is disordered. Over residues 436–449 (PQSTPSKDSFHPSS) the composition is skewed to polar residues.

As to quaternary structure, homodimer. Heterodimer; efficient DNA binding requires dimerization with another bHLH protein. Interacts with ARNT; the heterodimer ARNT:AHR binds to core DNA sequence 5'-TGCGTG-3' within the dioxin response element (DRE) of target gene promoters and activates their transcription. Binds MYBBP1A. Interacts with coactivators including SRC-1, RIP140 and NOCA7, and with the corepressor SMRT. Interacts with NEDD8 and IVNS1ABP. Interacts with BMAL1. Interacts with HSP90AB1. Interacts with TIPARP; leading to mono-ADP-ribosylation of AHR and subsequent inhibition of AHR. Post-translationally, mono-ADP-ribosylated, leading to inhibit transcription activator activity of AHR.

It localises to the cytoplasm. The protein localises to the nucleus. Its function is as follows. Ligand-activated transcription factor that enables cells to adapt to changing conditions by sensing compounds from the environment, diet, microbiome and cellular metabolism, and which plays important roles in development, immunity and cancer. Upon ligand binding, translocates into the nucleus, where it heterodimerizes with ARNT and induces transcription by binding to xenobiotic response elements (XRE). Regulates a variety of biological processes, including angiogenesis, hematopoiesis, drug and lipid metabolism, cell motility and immune modulation. Xenobiotics can act as ligands: upon xenobiotic-binding, activates the expression of multiple phase I and II xenobiotic chemical metabolizing enzyme genes (such as the CYP1A1 gene). Mediates biochemical and toxic effects of halogenated aromatic hydrocarbons. Next to xenobiotics, natural ligands derived from plants, microbiota, and endogenous metabolism are potent AHR agonists. Tryptophan (Trp) derivatives constitute an important class of endogenous AHR ligands. Acts as a negative regulator of anti-tumor immunity: indoles and kynurenic acid generated by Trp catabolism act as ligand and activate AHR, thereby promoting AHR-driven cancer cell motility and suppressing adaptive immunity. Regulates the circadian clock by inhibiting the basal and circadian expression of the core circadian component PER1. Inhibits PER1 by repressing the CLOCK-BMAL1 heterodimer mediated transcriptional activation of PER1. The heterodimer ARNT:AHR binds to core DNA sequence 5'-TGCGTG-3' within the dioxin response element (DRE) of target gene promoters and activates their transcription. This is Aryl hydrocarbon receptor (Ahr) from Mus musculus molossinus (Japanese house mouse).